A 90-amino-acid polypeptide reads, in one-letter code: Sec-independent protein translocase protein TatAo (90 aa).

Residues 8 to 28 (FPGLPGGPELLIVLLIVVLLF) form a helical membrane-spanning segment. The tract at residues 39–90 (SSGQAMGEFRRGREEIEEELKKGAEGGDDEGENGDEAEADDADATETEAESR) is disordered. The span at 46 to 63 (EFRRGREEIEEELKKGAE) shows a compositional bias: basic and acidic residues. Acidic residues predominate over residues 64 to 90 (GGDDEGENGDEAEADDADATETEAESR).

The protein belongs to the TatA/E family. As to quaternary structure, forms a complex with TatC. Cytoplasmic and membrane-bound TatA form high-molecular-weight complexes.

The protein resides in the cell membrane. It localises to the cytoplasm. Part of the twin-arginine translocation (Tat) system that transports large folded proteins containing a characteristic twin-arginine motif in their signal peptide across membranes. TatA could form the protein-conducting channel of the Tat system. The sequence is that of Sec-independent protein translocase protein TatAo from Haloferax volcanii (strain ATCC 29605 / DSM 3757 / JCM 8879 / NBRC 14742 / NCIMB 2012 / VKM B-1768 / DS2) (Halobacterium volcanii).